Reading from the N-terminus, the 637-residue chain is 1-deoxy-D-xylulose-5-phosphate synthase (637 aa).

Thiamine diphosphate is bound by residues histidine 76 and 117–119 (AHS). Mg(2+) is bound at residue aspartate 148. Thiamine diphosphate contacts are provided by residues 149–150 (GA), asparagine 177, tyrosine 287, and glutamate 369. A Mg(2+)-binding site is contributed by asparagine 177.

Belongs to the transketolase family. DXPS subfamily. In terms of assembly, homodimer. The cofactor is Mg(2+). It depends on thiamine diphosphate as a cofactor.

The catalysed reaction is D-glyceraldehyde 3-phosphate + pyruvate + H(+) = 1-deoxy-D-xylulose 5-phosphate + CO2. It functions in the pathway metabolic intermediate biosynthesis; 1-deoxy-D-xylulose 5-phosphate biosynthesis; 1-deoxy-D-xylulose 5-phosphate from D-glyceraldehyde 3-phosphate and pyruvate: step 1/1. Its function is as follows. Catalyzes the acyloin condensation reaction between C atoms 2 and 3 of pyruvate and glyceraldehyde 3-phosphate to yield 1-deoxy-D-xylulose-5-phosphate (DXP). This is 1-deoxy-D-xylulose-5-phosphate synthase from Pelagibacter ubique (strain HTCC1062).